The following is a 557-amino-acid chain: Potassium-transporting ATPase potassium-binding subunit (557 aa).

A run of 12 helical transmembrane segments spans residues 5–25, 63–83, 132–152, 170–190, 253–273, 283–303, 329–349, 356–376, 379–399, 416–436, 484–504, and 526–546; these read GFLL…PLGS, LCAI…MLLG, GLTV…FAFI, LLRI…LFFI, FVQM…FGEV, LLWA…WAEV, VLVS…AVIA, ALGG…FGGV, GLYG…LMIG, LTAL…ALAM, LLAF…MAIA, and LFVG…FIPA.

This sequence belongs to the KdpA family. In terms of assembly, the system is composed of three essential subunits: KdpA, KdpB and KdpC.

It is found in the cell inner membrane. Part of the high-affinity ATP-driven potassium transport (or Kdp) system, which catalyzes the hydrolysis of ATP coupled with the electrogenic transport of potassium into the cytoplasm. This subunit binds the periplasmic potassium ions and delivers the ions to the membrane domain of KdpB through an intramembrane tunnel. The protein is Potassium-transporting ATPase potassium-binding subunit of Shigella flexneri.